We begin with the raw amino-acid sequence, 136 residues long: uncharacterized protein (136 aa).

This is an uncharacterized protein from Ictaluridae (bullhead catfishes).